We begin with the raw amino-acid sequence, 142 residues long: Large ribosomal subunit protein uL13 (142 aa).

It belongs to the universal ribosomal protein uL13 family. Part of the 50S ribosomal subunit.

Functionally, this protein is one of the early assembly proteins of the 50S ribosomal subunit, although it is not seen to bind rRNA by itself. It is important during the early stages of 50S assembly. This chain is Large ribosomal subunit protein uL13, found in Pseudomonas aeruginosa (strain LESB58).